Consider the following 335-residue polypeptide: Protein STRICTOSIDINE SYNTHASE-LIKE 12 (335 aa).

Positions 1–22 (MTSFCSMISLLLLLSLSSAVFS) are cleaved as a signal peptide. N-linked (GlcNAc...) asparagine glycosylation occurs at Asn-80.

It belongs to the strictosidine synthase family.

The protein resides in the vacuole. It carries out the reaction 3alpha(S)-strictosidine + H2O = secologanin + tryptamine. It functions in the pathway alkaloid biosynthesis; 3alpha(S)-strictosidine biosynthesis; 3alpha(S)-strictosidine from secologanin and tryptamine: step 1/1. Catalyzes the stereospecific condensation of tryptamine with secologanin to form strictosidine, the key intermediate of indole alkaloid biosynthesis. The chain is Protein STRICTOSIDINE SYNTHASE-LIKE 12 from Arabidopsis thaliana (Mouse-ear cress).